Consider the following 282-residue polypeptide: Elongation factor Ts (282 aa).

Positions 80 to 83 (TDFV) are involved in Mg(2+) ion dislocation from EF-Tu.

It belongs to the EF-Ts family.

It localises to the cytoplasm. Associates with the EF-Tu.GDP complex and induces the exchange of GDP to GTP. It remains bound to the aminoacyl-tRNA.EF-Tu.GTP complex up to the GTP hydrolysis stage on the ribosome. This is Elongation factor Ts from Chlamydia felis (strain Fe/C-56) (Chlamydophila felis).